Here is a 246-residue protein sequence, read N- to C-terminus: 3-deoxy-manno-octulosonate cytidylyltransferase (246 aa).

The protein belongs to the KdsB family.

The protein localises to the cytoplasm. It catalyses the reaction 3-deoxy-alpha-D-manno-oct-2-ulosonate + CTP = CMP-3-deoxy-beta-D-manno-octulosonate + diphosphate. It functions in the pathway nucleotide-sugar biosynthesis; CMP-3-deoxy-D-manno-octulosonate biosynthesis; CMP-3-deoxy-D-manno-octulosonate from 3-deoxy-D-manno-octulosonate and CTP: step 1/1. Its pathway is bacterial outer membrane biogenesis; lipopolysaccharide biosynthesis. Activates KDO (a required 8-carbon sugar) for incorporation into bacterial lipopolysaccharide in Gram-negative bacteria. This Bradyrhizobium sp. (strain BTAi1 / ATCC BAA-1182) protein is 3-deoxy-manno-octulosonate cytidylyltransferase.